Consider the following 437-residue polypeptide: Gamma-glutamyl phosphate reductase (437 aa).

Belongs to the gamma-glutamyl phosphate reductase family.

It is found in the cytoplasm. It carries out the reaction L-glutamate 5-semialdehyde + phosphate + NADP(+) = L-glutamyl 5-phosphate + NADPH + H(+). It participates in amino-acid biosynthesis; L-proline biosynthesis; L-glutamate 5-semialdehyde from L-glutamate: step 2/2. In terms of biological role, catalyzes the NADPH-dependent reduction of L-glutamate 5-phosphate into L-glutamate 5-semialdehyde and phosphate. The product spontaneously undergoes cyclization to form 1-pyrroline-5-carboxylate. The sequence is that of Gamma-glutamyl phosphate reductase from Synechococcus sp. (strain CC9902).